The chain runs to 143 residues: uncharacterized protein (143 aa).

Residues 111–143 (VTQDISHTSGKSPTPKAKSSSPKKSKKKNWIPL) are disordered. Residues 119-130 (SGKSPTPKAKSS) are compositionally biased toward low complexity. Residues 131 to 143 (SPKKSKKKNWIPL) show a composition bias toward basic residues.

This sequence belongs to the chlamydial CPn_0742/CT_635/TC_0003 family.

This is an uncharacterized protein from Chlamydia muridarum (strain MoPn / Nigg).